The following is a 214-amino-acid chain: uncharacterized protein (214 aa).

The Response regulatory domain maps to 2–118; it reads KIVIADDHHV…ELVKTRQVHG (117 aa). At Asp53 the chain carries 4-aspartylphosphate. The 66-residue stretch at 142 to 207 folds into the HTH luxR-type domain; sequence EKEKYYQLTR…QAALFAVKYN (66 aa). Residues 166 to 185 constitute a DNA-binding region (H-T-H motif); sequence NKEIAAALFISEKTVKTHVS.

Phosphorylated by YhcY.

Its subcellular location is the cytoplasm. In terms of biological role, member of the two-component regulatory system YhcY/YhcZ. This is an uncharacterized protein from Bacillus subtilis (strain 168).